The primary structure comprises 125 residues: Holo-[acyl-carrier-protein] synthase (125 aa).

Positions 8 and 57 each coordinate Mg(2+).

Belongs to the P-Pant transferase superfamily. AcpS family. It depends on Mg(2+) as a cofactor.

It localises to the cytoplasm. The enzyme catalyses apo-[ACP] + CoA = holo-[ACP] + adenosine 3',5'-bisphosphate + H(+). Its function is as follows. Transfers the 4'-phosphopantetheine moiety from coenzyme A to a Ser of acyl-carrier-protein. This chain is Holo-[acyl-carrier-protein] synthase, found in Koribacter versatilis (strain Ellin345).